The following is a 1083-amino-acid chain: LIM and calponin homology domains-containing protein 1 (1083 aa).

Disordered stretches follow at residues 1–22, 185–248, and 291–311; these read MASNAALQGEDIPQPQESPPDT, SERS…VRKD, and REDYRKSWSTATSPLGGERPF. The 118-residue stretch at 21–138 folds into the Calponin-homology (CH) domain; that stretch reads DTACMEAQKW…TVYWLGKAAN (118 aa). The span at 229–248 shows a compositional bias: basic and acidic residues; it reads RGSDSESDLPHRRIPDVRKD. A coiled-coil region spans residues 356-424; sequence LARWKTRRRS…HVAYKNAKTR (69 aa). Residues 462–474 show a composition bias toward low complexity; that stretch reads PSLLSSSEDPNPL. 4 disordered regions span residues 462–512, 625–661, 698–725, and 759–779; these read PSLL…LISP, QKDEPDSFVQEESVHSVEQLSEGNTQSNSTTQAVPAV, KEAKKNSLPPLKSSENVEESSKIKENES, and SPALVPNLSSPNRSCTWDPEE. Polar residues-rich tracts occupy residues 478–512 and 640–657; these read RQQSLPSPKYTSTVEATVTPSSPCESKSPTGLISP and SVEQLSEGNTQSNSTTQA. A compositionally biased stretch (basic and acidic residues) spans 716–725; it reads ESSKIKENES. Residues 784–835 adopt a coiled-coil conformation; that stretch reads QEKWQQEQERLLQERYQKEQEKLKEEWEKAQKEVEEEERKYYEEERKIIEDT. The interval 987–1006 is disordered; sequence KEETLNSSQSTSQCQSPNRS. Positions 991-1006 are enriched in polar residues; the sequence is LNSSQSTSQCQSPNRS. Residues 1011 to 1077 enclose the LIM zinc-binding domain; it reads KLCSTCGLPL…NDCYVKSRTA (67 aa).

This sequence belongs to the LIMCH1 family.

The protein resides in the cytoplasm. Its subcellular location is the cytoskeleton. It localises to the stress fiber. Its function is as follows. Actin stress fibers-associated protein that activates non-muscle myosin IIa. Through the activation of non-muscle myosin IIa, positively regulates actin stress fibers assembly and stabilizes focal adhesions. It therefore negatively regulates cell spreading and cell migration. The polypeptide is LIM and calponin homology domains-containing protein 1 (limch1) (Xenopus laevis (African clawed frog)).